A 295-amino-acid chain; its full sequence is Glycine--tRNA ligase alpha subunit (295 aa).

The protein belongs to the class-II aminoacyl-tRNA synthetase family. In terms of assembly, tetramer of two alpha and two beta subunits.

The protein resides in the cytoplasm. It catalyses the reaction tRNA(Gly) + glycine + ATP = glycyl-tRNA(Gly) + AMP + diphosphate. This Prochlorococcus marinus (strain MIT 9215) protein is Glycine--tRNA ligase alpha subunit.